The primary structure comprises 167 residues: uncharacterized protein (167 aa).

The signal sequence occupies residues Met1–Ser25.

This is an uncharacterized protein from Caenorhabditis elegans.